A 319-amino-acid polypeptide reads, in one-letter code: Putative replication factor C small subunit R395 (319 aa).

45 to 52 (GSPGVGKT) is a binding site for ATP.

It belongs to the activator 1 small subunits family. RfcS subfamily.

In terms of biological role, part of the RFC clamp loader complex which loads the PCNA sliding clamp onto DNA. The chain is Putative replication factor C small subunit R395 from Acanthamoeba polyphaga mimivirus (APMV).